Reading from the N-terminus, the 262-residue chain is ATP synthase subunit a (262 aa).

5 consecutive transmembrane segments (helical) span residues 25-45 (NVHI…LAVF), 86-106 (VAPL…IDLI), 130-150 (DISA…FYTV), 204-226 (LIFI…GIPL), and 240-260 (LQAF…YNKA).

This sequence belongs to the ATPase A chain family. In terms of assembly, F-type ATPases have 2 components, CF(1) - the catalytic core - and CF(0) - the membrane proton channel. CF(1) has five subunits: alpha(3), beta(3), gamma(1), delta(1), epsilon(1). CF(0) has three main subunits: a(1), b(2) and c(9-12). The alpha and beta chains form an alternating ring which encloses part of the gamma chain. CF(1) is attached to CF(0) by a central stalk formed by the gamma and epsilon chains, while a peripheral stalk is formed by the delta and b chains.

It is found in the cell inner membrane. Its function is as follows. Key component of the proton channel; it plays a direct role in the translocation of protons across the membrane. The polypeptide is ATP synthase subunit a (Mannheimia succiniciproducens (strain KCTC 0769BP / MBEL55E)).